Consider the following 213-residue polypeptide: Probable inactive serine/threonine-protein kinase DDB_G0280559 (213 aa).

The Protein kinase domain maps to 1–211 (MVLRYSYVFK…WNEIVNHSFF (211 aa)).

This sequence belongs to the protein kinase superfamily. Ser/Thr protein kinase family.

In Dictyostelium discoideum (Social amoeba), this protein is Probable inactive serine/threonine-protein kinase DDB_G0280559.